Reading from the N-terminus, the 218-residue chain is Ras-related protein RABA1i (218 aa).

GTP is bound at residue 20–27 (GDSGVGKS). The short motif at 42–50 (SRATIGVEF) is the Effector region element. GTP-binding positions include 68 to 72 (DTAGQ), 126 to 129 (NKAD), and 156 to 157 (SA). S-geranylgeranyl cysteine attachment occurs at residues C215 and C216.

It belongs to the small GTPase superfamily. Rab family.

Its subcellular location is the cell membrane. In terms of biological role, intracellular vesicle trafficking and protein transport. This Arabidopsis thaliana (Mouse-ear cress) protein is Ras-related protein RABA1i (RABA1I).